A 291-amino-acid polypeptide reads, in one-letter code: Glycine--tRNA ligase alpha subunit (291 aa).

It belongs to the class-II aminoacyl-tRNA synthetase family. Tetramer of two alpha and two beta subunits.

The protein resides in the cytoplasm. The catalysed reaction is tRNA(Gly) + glycine + ATP = glycyl-tRNA(Gly) + AMP + diphosphate. This is Glycine--tRNA ligase alpha subunit from Trichlorobacter lovleyi (strain ATCC BAA-1151 / DSM 17278 / SZ) (Geobacter lovleyi).